The primary structure comprises 99 residues: uncharacterized protein (99 aa).

The next 3 helical transmembrane spans lie at Phe7 to Tyr29, Phe39 to Asn61, and Phe68 to Leu90.

The protein localises to the cell membrane. This is an uncharacterized protein from Archaeoglobus fulgidus (strain ATCC 49558 / DSM 4304 / JCM 9628 / NBRC 100126 / VC-16).